We begin with the raw amino-acid sequence, 196 residues long: DnaA initiator-associating protein DiaA (196 aa).

Residues 34 to 196 (MVQSLLNGNK…DNTLFPHQND (163 aa)) form the SIS domain.

This sequence belongs to the SIS family. DiaA subfamily. Homotetramer; dimer of dimers.

In terms of biological role, required for the timely initiation of chromosomal replication via direct interactions with the DnaA initiator protein. The protein is DnaA initiator-associating protein DiaA of Pectobacterium atrosepticum (strain SCRI 1043 / ATCC BAA-672) (Erwinia carotovora subsp. atroseptica).